The following is a 708-amino-acid chain: O-antigen chain terminator bifunctional methyltransferase/kinase WbdD (708 aa).

Residues 1–210 (MTKDLNTLVS…VPRPMYLVSN (210 aa)) are methyltransferase. Residues 16-17 (YQ), R36, G61, 82-87 (DFQQEN), 108-111 (GRIE), and L128 each bind S-adenosyl-L-methionine. Positions 211–459 (HRVLINDFNQ…AKLPSAEQQR (249 aa)) are kinase. ATP contacts are provided by residues P229, H237, 241-243 (RRY), K252, E274, 309-311 (EKL), M358, and D369. The stretch at 485–594 (AGSEALRGQI…EIEKIHRSRS (110 aa)) forms a coiled coil. The tract at residues 601 to 669 (YRYLGLQIHL…RLYRRMNPLP (69 aa)) is required for membrane-binding. Residues 687–708 (VMHPELLPPEVYEIYLKLTKNK) form a required for localizing WbdA to the membrane region.

It belongs to the WbdD family. Homotrimer in solution. Interacts with WbdA.

It is found in the cell inner membrane. The enzyme catalyses 3-O-phospho-alpha-D-Man-(1-&gt;2)-alpha-D-Man-(1-&gt;2)-[alpha-D-Man-(1-&gt;3)-alpha-D-Man-(1-&gt;3)-alpha-D-Man-(1-&gt;2)-alpha-D-Man-(1-&gt;2)](n)-alpha-D-Man-(1-&gt;3)-alpha-D-Man-(1-&gt;3)-alpha-D-Man-(1-&gt;3)-alpha-D-GlcNAc-di-trans,octa-cis-undecaprenyl diphosphate + S-adenosyl-L-methionine = 3-O-methylphospho-alpha-D-Man-(1-&gt;2)-alpha-D-Man-(1-&gt;2)-[alpha-D-Man-(1-&gt;3)-alpha-D-Man-(1-&gt;3)-alpha-D-Man-(1-&gt;2)-alpha-D-Man-(1-&gt;2)](n)-alpha-D-Man-(1-&gt;3)-alpha-D-Man-(1-&gt;3)-alpha-D-Man-(1-&gt;3)-alpha-D-GlcNAc-di-trans,octa-cis-undecaprenyl diphosphate + S-adenosyl-L-homocysteine. It carries out the reaction alpha-D-Man-(1-&gt;2)-alpha-D-Man-(1-&gt;2)-[alpha-D-Man-(1-&gt;3)-alpha-D-Man-(1-&gt;3)-alpha-D-Man-(1-&gt;2)-alpha-D-Man-(1-&gt;2)](n)-alpha-D-Man-(1-&gt;3)-alpha-D-Man-(1-&gt;3)-alpha-D-Man-(1-&gt;3)-alpha-D-GlcNAc-di-trans,octa-cis-undecaprenyl diphosphate + ATP = 3-O-phospho-alpha-D-Man-(1-&gt;2)-alpha-D-Man-(1-&gt;2)-[alpha-D-Man-(1-&gt;3)-alpha-D-Man-(1-&gt;3)-alpha-D-Man-(1-&gt;2)-alpha-D-Man-(1-&gt;2)](n)-alpha-D-Man-(1-&gt;3)-alpha-D-Man-(1-&gt;3)-alpha-D-Man-(1-&gt;3)-alpha-D-GlcNAc-di-trans,octa-cis-undecaprenyl diphosphate + ADP + H(+). It functions in the pathway bacterial outer membrane biogenesis; LPS O-antigen biosynthesis. In terms of biological role, regulates the length of the LPS O-antigen polysaccharide chain. Stops the polymerization of the chain by phosphorylating and then methylating the phosphate on the terminal sugar. This terminal modification is essential for export of the O-antigen across the inner membrane. WbdD is also required for correct localization of the WbdA mannosyltransferase. The protein is O-antigen chain terminator bifunctional methyltransferase/kinase WbdD of Escherichia coli.